Consider the following 281-residue polypeptide: Para-Rep C1 (281 aa).

The CRESS-DNA virus Rep endonuclease domain maps to 3–97 (TLQGTFWCFT…VAGPWTYGEL (95 aa)). An RCR-1 motif is present at residues 10–13 (CFTL). The a divalent metal cation site is built by Glu-36 and His-42. The RCR-2 motif lies at 42–44 (HLQ). Positions 51 to 71 (KRSTLKMMKELLPGAHLEVSK) match the Nuclear localization signal motif. The active-site For DNA cleavage activity is the Tyr-80. The RCR-3 signature appears at 80 to 83 (YAMK). Glu-85 serves as a coordination point for a divalent metal cation. The Nuclear localization signal signature appears at 97–103 (LLKKGSN). 173-181 (GPQGGEGKT) provides a ligand contact to ATP.

It belongs to the nanoviridea/circoviridae replication-associated protein family. In terms of assembly, homooligomer (Potential). Rep binds to repeated DNA motifs (iterons). Mg(2+) is required as a cofactor. Mn(2+) serves as cofactor.

Its subcellular location is the host nucleus. The catalysed reaction is ATP + H2O = ADP + phosphate + H(+). Functionally, initiates and terminates the replication only of its own subviral DNA molecule. The closed circular ssDNA genome is first converted to a superhelical dsDNA. Rep binds a specific hairpin at the genome origin of replication. Introduces an endonucleolytic nick within the intergenic region of the genome, thereby initiating the rolling circle replication (RCR). Following cleavage, binds covalently to the 5'-phosphate of DNA as a tyrosyl ester. The cleavage gives rise to a free 3'-OH that serves as a primer for the cellular DNA polymerase. The polymerase synthesizes the (+) strand DNA by rolling circle mechanism. After one round of replication, a Rep-catalyzed nucleotidyl transfer reaction releases a circular single-stranded virus genome, thereby terminating the replication. Displays origin-specific DNA cleavage, nucleotidyl transferase, ATPase and helicase activities. This is Para-Rep C1 (C1) from Milk vetch dwarf C1 alphasatellite (MVDC1A).